We begin with the raw amino-acid sequence, 569 residues long: MDEEIKHEIRKMALQNAFEHGGQTQDKIILGKILGTKPEFRTKVKEISGEISEIVASVNQLSPEEQQKEMEEKFPEALAPKEKIEEREGLPELKDAIQGKVVTRFPPEPNGYPHIGHAKAAIINSEYAKMYGGKFILRMDDTNPEAERMEYHAAIKVGLEWLGIEFDQVKSTSDDMEVFYEKGIELINSGKAYVCTCKREDISQNRRERKACKCSMEDVGKNNKNWEKMQNKFKPGEAIVRFRGDMKADNAVMRDPVLLRIIDEKHYTVGDKYRIWPSYDFAVAIEDSIDGVTHAFRSKEFELRKELIDAILDALGMRKPQQGFFSRLEFKGMPISKRIIKPLIEEGKVSWYDDPRLPTLEALRRRGIKPEAIRKFIMSLGLTKANTLAPFDALEAFNRKFVDADSMRLFMVKNAKKLKIKNLQSTIVEVPNHPINDLGKRKIEITEDFYISGDDSEAIKEQSTIRLLGLGNVKITKIGNELEGEFERDGDSSNILKIQWVPQKTAHEIKMIIPKILFNDEEFNEDSLEELDVYTEPQYLQLKEGEEIQFVRFGYCRKDSQNQAIFTHK.

The 'HIGH' region motif lies at 107 to 117 (PEPNGYPHIGH).

This sequence belongs to the class-I aminoacyl-tRNA synthetase family. Glutamate--tRNA ligase type 2 subfamily.

Its subcellular location is the cytoplasm. The catalysed reaction is tRNA(Glu) + L-glutamate + ATP = L-glutamyl-tRNA(Glu) + AMP + diphosphate. Its function is as follows. Catalyzes the attachment of glutamate to tRNA(Glu) in a two-step reaction: glutamate is first activated by ATP to form Glu-AMP and then transferred to the acceptor end of tRNA(Glu). This chain is Glutamate--tRNA ligase, found in Nitrosopumilus maritimus (strain SCM1).